Reading from the N-terminus, the 172-residue chain is Peptide deformylase (172 aa).

2 residues coordinate Fe cation: Cys94 and His136. Glu137 is a catalytic residue. Fe cation is bound at residue His140.

Belongs to the polypeptide deformylase family. Requires Fe(2+) as cofactor.

It carries out the reaction N-terminal N-formyl-L-methionyl-[peptide] + H2O = N-terminal L-methionyl-[peptide] + formate. Functionally, removes the formyl group from the N-terminal Met of newly synthesized proteins. Requires at least a dipeptide for an efficient rate of reaction. N-terminal L-methionine is a prerequisite for activity but the enzyme has broad specificity at other positions. The polypeptide is Peptide deformylase (Pelagibacter ubique (strain HTCC1062)).